The sequence spans 207 residues: Phosphoribosylglycinamide formyltransferase (207 aa).

Gly13–Asn15 is a N(1)-(5-phospho-beta-D-ribosyl)glycinamide binding site. (6R)-10-formyltetrahydrofolate contacts are provided by residues Met100–Leu103 and Asn120. Catalysis depends on His122, which acts as the Proton donor. A (6R)-10-formyltetrahydrofolate-binding site is contributed by Asp162. Glu191 is a binding site for N(1)-(5-phospho-beta-D-ribosyl)glycinamide.

The protein belongs to the GART family.

The catalysed reaction is N(1)-(5-phospho-beta-D-ribosyl)glycinamide + (6R)-10-formyltetrahydrofolate = N(2)-formyl-N(1)-(5-phospho-beta-D-ribosyl)glycinamide + (6S)-5,6,7,8-tetrahydrofolate + H(+). It functions in the pathway purine metabolism; IMP biosynthesis via de novo pathway; N(2)-formyl-N(1)-(5-phospho-D-ribosyl)glycinamide from N(1)-(5-phospho-D-ribosyl)glycinamide (10-formyl THF route): step 1/1. This chain is Phosphoribosylglycinamide formyltransferase (ade5), found in Schizosaccharomyces pombe (strain 972 / ATCC 24843) (Fission yeast).